The chain runs to 533 residues: Multicopy suppressor of sporulation protein msa1 (533 aa).

The tract at residues 30-68 (DIPPGSLSENDNSTTFIKPPLETASSSTPIPSSSSSGVL) is disordered. Residues 36–45 (LSENDNSTTF) are compositionally biased toward polar residues. Residues 54–68 (SSSTPIPSSSSSGVL) show a composition bias toward low complexity. Residues 79–158 (ACLFVASLNS…RHIRIERAKV (80 aa)) form the RRM 1 domain. A disordered region spans residues 237–292 (YKKKGSSPFSPPNAHSRRRKSQGKDQSNTPVIKAPAPIPFSVSSDPPSTMGRSNSA). Positions 277–292 (SVSSDPPSTMGRSNSA) are enriched in polar residues. In terms of domain architecture, RRM 2 spans 365–441 (YSIFVGQLDP…KPLRVEFRQL (77 aa)).

The protein resides in the cytoplasm. Its function is as follows. Negative regulator of sexual differentiation. Acts by repressing the transcription of meiosis-inducing, ste11-regulated genes. This Schizosaccharomyces pombe (strain 972 / ATCC 24843) (Fission yeast) protein is Multicopy suppressor of sporulation protein msa1 (msa1).